Consider the following 299-residue polypeptide: Non-structural protein V (299 aa).

Positions 41–99 are disordered; it reads DNPGQERATCREEKAGSSGLSKPCLSAIGSTEGGAPRIRGQGPGESDDDAETLGIPPRN. The segment at 110-120 is interaction with host STAT1; that stretch reads YYVYDHSGEAV. A compositionally biased stretch (low complexity) spans 134 to 145; it reads GLDGDSTLSGGD. The interval 134-168 is disordered; that stretch reads GLDGDSTLSGGDNESENSDVDIGEPDTEGYAITDR. Residues 146–160 are compositionally biased toward acidic residues; sequence NESENSDVDIGEPDT. Residues His232, Cys251, Cys255, Cys267, Cys269, Cys272, Cys276, and Cys279 each contribute to the Zn(2+) site.

The protein belongs to the paramyxoviruses V protein family. Interacts with host IFIH1/MDA5 and DHX58/LGP2; these interactions are involved in the inhibition of the host type I interferon signaling pathway. Interacts with host TYK2; this interaction inhibits the type I interferon signaling pathway without affecting the type II pathway. Interacts with host IRF7; this interaction inhibits IRF7 translocation to the nucleus. Interacts with host CHUK. Interacts with host RELA/p65; this interaction inhibits the nuclear translocation of NF-KappaB. Interacts (via N-terminus) with host STAT1 and JAK1; these interactions inhibit STAT1 phosphorylation by Jak1 and thereby the type I interferon signaling pathway. Interacts (via C-terminus) with host STAT2; this interaction is involved in the inhibition of the host type I interferon signaling pathway. Forms a complex with host PPP1CA and PPP1CC; this interaction prevents dephosphorylation of host IFIH1/MDA5 and leads to the inhibition of the host type I interferon signaling pathway. Interacts with host IRF9; this interaction prevents the binding of IRF9 to STAT2 and thereby the type I interferon signaling pathway. Interacts with host RIGI regulatory protein (via CARDs domain) and host TRIM25 (via SPRY domain); these interactions prevent TRIM25-mediated ubiquitination of RIG-I and disrupts downstream RIG-I signaling.

It localises to the host cytoplasm. Plays an essential role in the inhibition of host immune response. Prevents the establishment of cellular antiviral state by blocking interferon-alpha/beta (IFN-alpha/beta) production and signaling pathway. Interacts with host IFIH1/MDA5 and DHX58/LGP2 to inhibit the transduction pathway involved in the activation of IFN-beta promoter, thus protecting the virus against cell antiviral state. Blocks the type I interferon signaling pathway by interacting with host TYK2 and thereby inhibiting downstream STAT1 and STAT2 phosphorylation. Blocks the type I interferon signaling pathway by disrupting the RIG-I signaling pathway. Moderately affects the type II interferon signaling. Prevents PP1alpha/gamma-mediated dephosphorylation of host IFIH1/MDA5 and thus blocks its activation. This chain is Non-structural protein V (P/V), found in Measles virus (strain Edmonston) (MeV).